A 387-amino-acid chain; its full sequence is Enoyl-[acyl-carrier-protein] reductase 2, mitochondrial (387 aa).

The transit peptide at 1-23 directs the protein to the mitochondrion; the sequence is MYRNQLARASLRSTSSINQIRNM. Tyr79 acts as the Proton donor in catalysis. Residues Asn172, 199-202, 222-224, 297-300, 322-324, and Lys382 contribute to the NADP(+) site; these read NSAV, RDR, YGGM, and FWV.

It belongs to the zinc-containing alcohol dehydrogenase family. Quinone oxidoreductase subfamily. In terms of assembly, homodimer.

It is found in the mitochondrion matrix. It catalyses the reaction a 2,3-saturated acyl-[ACP] + NADP(+) = a (2E)-enoyl-[ACP] + NADPH + H(+). Functionally, catalyzes the NADPH-dependent reduction of trans-2-enoyl thioesters in mitochondrial fatty acid synthesis (fatty acid synthesis type II). Fatty acid chain elongation in mitochondria uses acyl carrier protein (ACP) as an acyl group carrier, but the enzyme accepts both ACP and CoA thioesters as substrates in vitro. Required for respiration and the maintenance of the mitochondrial compartment. This Debaryomyces hansenii (strain ATCC 36239 / CBS 767 / BCRC 21394 / JCM 1990 / NBRC 0083 / IGC 2968) (Yeast) protein is Enoyl-[acyl-carrier-protein] reductase 2, mitochondrial (ETR2).